Consider the following 623-residue polypeptide: UvrABC system protein C (623 aa).

Positions 28–105 constitute a GIY-YIG domain; that stretch reads GAPGVYRMLD…IKQLKPKYNV (78 aa). The 36-residue stretch at 215–250 folds into the UVR domain; the sequence is TRVQEELAEQMMAASEAMEFERAAALRDRIRALTTV.

It belongs to the UvrC family. As to quaternary structure, interacts with UvrB in an incision complex.

The protein resides in the cytoplasm. Functionally, the UvrABC repair system catalyzes the recognition and processing of DNA lesions. UvrC both incises the 5' and 3' sides of the lesion. The N-terminal half is responsible for the 3' incision and the C-terminal half is responsible for the 5' incision. The sequence is that of UvrABC system protein C from Ruegeria pomeroyi (strain ATCC 700808 / DSM 15171 / DSS-3) (Silicibacter pomeroyi).